A 626-amino-acid chain; its full sequence is Protein ALEX (626 aa).

4 disordered regions span residues 1-29 (MMARPVDPQRSPDPTFRSSTRHSGKLEPM), 173-223 (TTAH…AAHP), 236-473 (AAPG…APRS), and 556-612 (AASV…NNSR). Polar residues-rich tracts occupy residues 186 to 195 (KSTAAASSRQ) and 255 to 270 (GSTTLPSTWTAPQSRL). Residues 281-312 (QIRESEQRDPQLRRKQQRWKEPLMPRREEKYP) are compositionally biased toward basic and acidic residues. The segment covering 337-346 (QPILTPGQPQ) has biased composition (low complexity). A compositionally biased stretch (pro residues) spans 366–399 (IPTPGQPLPPQPIPTPGRPLTPQPIPTPGRPLTP). A compositionally biased stretch (low complexity) spans 416–435 (RLLRPGQPMSPQLRQTQGLP). Positions 436-445 (LPQPLLPPGQ) are enriched in pro residues. The span at 570–579 (ALSRSRRYPW) shows a compositional bias: basic residues. A compositionally biased stretch (polar residues) spans 600-611 (RRNAVSSSTNNS).

It belongs to the ALEX family. As to quaternary structure, interacts with the N-terminal region of the XLas isoforms of guanine nucleotide-binding protein G(s) subunit alpha.

It is found in the cell membrane. The protein resides in the cell projection. Its subcellular location is the ruffle. In terms of biological role, may inhibit the adenylyl cyclase-stimulating activity of guanine nucleotide-binding protein G(s) subunit alpha which is produced from the same locus in a different open reading frame. The sequence is that of Protein ALEX from Homo sapiens (Human).